The sequence spans 504 residues: D-alanine--D-alanyl carrier protein ligase (504 aa).

An ATP-binding site is contributed by 152 to 153; that stretch reads TS. D197 serves as a coordination point for D-alanine. Residue 292–297 participates in ATP binding; the sequence is NTYGPT. A D-alanine-binding site is contributed by V301. Residues D383, 394–397, and K492 each bind ATP; that span reads YNGR. Position 492 (K492) interacts with D-alanine.

The protein belongs to the ATP-dependent AMP-binding enzyme family. DltA subfamily.

It is found in the cytoplasm. The catalysed reaction is holo-[D-alanyl-carrier protein] + D-alanine + ATP = D-alanyl-[D-alanyl-carrier protein] + AMP + diphosphate. It participates in cell wall biogenesis; lipoteichoic acid biosynthesis. Catalyzes the first step in the D-alanylation of lipoteichoic acid (LTA), the activation of D-alanine and its transfer onto the D-alanyl carrier protein (Dcp) DltC. In an ATP-dependent two-step reaction, forms a high energy D-alanyl-AMP intermediate, followed by transfer of the D-alanyl residue as a thiol ester to the phosphopantheinyl prosthetic group of the Dcp. D-alanylation of LTA plays an important role in modulating the properties of the cell wall in Gram-positive bacteria, influencing the net charge of the cell wall. The chain is D-alanine--D-alanyl carrier protein ligase from Bacillus cytotoxicus (strain DSM 22905 / CIP 110041 / 391-98 / NVH 391-98).